Consider the following 139-residue polypeptide: MAAPKKTQKRMPRRREEFTYRGYKIDELKAMGLSELIPLMPARARRKFNRGLNRGEETLLEKIRGGDEKIRTHLREMIVMPEMIGKSIEIYNGKEFLKVEFQPESVFHYLGEFALTRKRVTHGSAGIGATRGSKYVPLK.

This sequence belongs to the universal ribosomal protein uS19 family.

Protein S19 forms a complex with S13 that binds strongly to the 16S ribosomal RNA. The sequence is that of Small ribosomal subunit protein uS19 from Methanoregula boonei (strain DSM 21154 / JCM 14090 / 6A8).